Consider the following 473-residue polypeptide: Proline--tRNA ligase (473 aa).

This sequence belongs to the class-II aminoacyl-tRNA synthetase family. ProS type 3 subfamily. As to quaternary structure, homodimer.

The protein localises to the cytoplasm. It carries out the reaction tRNA(Pro) + L-proline + ATP = L-prolyl-tRNA(Pro) + AMP + diphosphate. Its function is as follows. Catalyzes the attachment of proline to tRNA(Pro) in a two-step reaction: proline is first activated by ATP to form Pro-AMP and then transferred to the acceptor end of tRNA(Pro). In Mesoplasma florum (strain ATCC 33453 / NBRC 100688 / NCTC 11704 / L1) (Acholeplasma florum), this protein is Proline--tRNA ligase.